A 356-amino-acid chain; its full sequence is Tetraacyldisaccharide 4'-kinase (356 aa).

Residue 51–58 (GWGGSGKT) coordinates ATP.

This sequence belongs to the LpxK family.

The enzyme catalyses a lipid A disaccharide + ATP = a lipid IVA + ADP + H(+). Its pathway is glycolipid biosynthesis; lipid IV(A) biosynthesis; lipid IV(A) from (3R)-3-hydroxytetradecanoyl-[acyl-carrier-protein] and UDP-N-acetyl-alpha-D-glucosamine: step 6/6. Transfers the gamma-phosphate of ATP to the 4'-position of a tetraacyldisaccharide 1-phosphate intermediate (termed DS-1-P) to form tetraacyldisaccharide 1,4'-bis-phosphate (lipid IVA). The chain is Tetraacyldisaccharide 4'-kinase from Oleidesulfovibrio alaskensis (strain ATCC BAA-1058 / DSM 17464 / G20) (Desulfovibrio alaskensis).